A 353-amino-acid polypeptide reads, in one-letter code: Glycerol-3-phosphate dehydrogenase [NAD(P)+] (353 aa).

The NADPH site is built by W11, R40, and K115. 3 residues coordinate sn-glycerol 3-phosphate: K115, G156, and S158. A160 serves as a coordination point for NADPH. 5 residues coordinate sn-glycerol 3-phosphate: K211, D264, S274, R275, and N276. The active-site Proton acceptor is the K211. R275 contributes to the NADPH binding site. NADPH-binding residues include V299 and E301.

It belongs to the NAD-dependent glycerol-3-phosphate dehydrogenase family.

It localises to the cytoplasm. It catalyses the reaction sn-glycerol 3-phosphate + NAD(+) = dihydroxyacetone phosphate + NADH + H(+). It carries out the reaction sn-glycerol 3-phosphate + NADP(+) = dihydroxyacetone phosphate + NADPH + H(+). It functions in the pathway membrane lipid metabolism; glycerophospholipid metabolism. In terms of biological role, catalyzes the reduction of the glycolytic intermediate dihydroxyacetone phosphate (DHAP) to sn-glycerol 3-phosphate (G3P), the key precursor for phospholipid synthesis. This Polaromonas sp. (strain JS666 / ATCC BAA-500) protein is Glycerol-3-phosphate dehydrogenase [NAD(P)+].